The following is a 400-amino-acid chain: WD repeat and FYVE domain-containing protein 2 (400 aa).

6 WD repeats span residues 22-61 (GSQEVVNMAVIVPKEEGVISVSEDRTVRVWLKRDSGQYWP), 66-105 (AMPSPCSCMSFNPETRRLSIGLDNGTISEFILSEDYNKMT), 112-150 (AHQSRVTMILFVLELEWVLSTGQDKQFAWHCSESGQRLG), 153-192 (RTSAVASGLQFDVETRHVFIGDHSGQVTILKLEQENCTLV), 197-236 (GHTGGVTALCWDPVQRVLFSGSSDHSVIMWDIGGRKGTAI), and 240-279 (GHNDRVQALSYAQHTRQLISCGGDGGIVVWNMDVERQETP). An FYVE-type zinc finger spans residues 281-352 (WLDSDSCQKC…VCDSCHEAIT (72 aa)). Residues Cys-287, Cys-290, Cys-314, Cys-317, Cys-322, Cys-325, Cys-344, and Cys-347 each coordinate Zn(2+). The stretch at 364–399 (DSKHNIVHVHFDATRGWLLTSGTDKVIKLWDMTPVV) is one WD 7 repeat.

As to quaternary structure, homodimer. Interacts (via WD repeats 1-3) with AKT1, AKT2, PRKCZ and PRKCI. Interacts with VAMP2. Forms a complex with VAMP2 and PRKCZ. Interacts with FOXO1. Forms a complex with AKT1 and FOXO1.

Its subcellular location is the endosome. The protein resides in the early endosome. It is found in the cytoplasm. In terms of biological role, acts in an adapter protein-like fashion to mediate the interaction between the kinase PRKCZ and its substrate VAMP2 and increases the PRKCZ-dependent phosphorylation of VAMP2. Positively regulates adipocyte differentiation, by facilitating the phosphorylation and thus inactivation of the anti-adipogenetic transcription factor FOXO1 by the kinase AKT1. Plays a role in endosomal control of AKT2 signaling; required for insulin-stimulated AKT2 phosphorylation and glucose uptake and insulin-stimulated phosphorylation of AKT2 substrates. Participates in transferrin receptor endocytosis. This chain is WD repeat and FYVE domain-containing protein 2 (WDFY2), found in Homo sapiens (Human).